A 266-amino-acid chain; its full sequence is Probable catechol O-methyltransferase 1 (266 aa).

Positions 56, 78, 86, 106, 107, 135, and 162 each coordinate S-adenosyl-L-methionine. Position 162 (Asp-162) interacts with Mg(2+). Lys-165 provides a ligand contact to substrate. 2 residues coordinate Mg(2+): Asp-190 and Asn-191. Asn-191 lines the substrate pocket.

It belongs to the class I-like SAM-binding methyltransferase superfamily. Cation-dependent O-methyltransferase family. Mg(2+) serves as cofactor.

The protein localises to the cytoplasm. It is found in the nucleus. It catalyses the reaction a catechol + S-adenosyl-L-methionine = a guaiacol + S-adenosyl-L-homocysteine + H(+). This is Probable catechol O-methyltransferase 1 from Schizosaccharomyces pombe (strain 972 / ATCC 24843) (Fission yeast).